The sequence spans 406 residues: MSRRRISCKDLGHADCQGWLYKKKEKGTFLSNKWKKFWVVLKGSSLYWYSNQMAEKADGFVNLSDFTVERASECKKKNAFKINHPQIKAFYFAAENLQEMNVWLNKLGFAVTHQESITKDEECYSESEQEDPEVAVEAPPPPYASTTSSPVAAQWASSSSPKRRETSCSFSSLENTVKAPSQFSSSGSKERQSWHNIVNSSPATEDAGLPLTFAEQVHTLAFSEASNCQAPENNCITSEGGLLNLLSSDDTSSLNNNKDHLTVPDRAAGSRMADREEIKSSEDDEMEKLYKSLEQASLSPLGDRRPSTKKELRKSFVKRCKNPSINEKLHKIRTLNSTLKCKEHDLAMINQLLDDPKLTARKYREWKVMNTLLIQDIYQQQAPQDPEVTPQEVMNPTSSDCVENSL.

Residues 13 to 112 (HADCQGWLYK…WLNKLGFAVT (100 aa)) form the PH domain. Disordered regions lie at residues 120 to 173 (DEEC…FSSL), 253 to 285 (SLNNNKDHLTVPDRAAGSRMADREEIKSSEDDE), and 383 to 406 (PQDPEVTPQEVMNPTSSDCVENSL). Residues 123–134 (CYSESEQEDPEV) are compositionally biased toward acidic residues. The segment covering 144–153 (ASTTSSPVAA) has biased composition (low complexity). At Arg164 the chain carries Phosphoserine. A compositionally biased stretch (basic and acidic residues) spans 272-285 (MADREEIKSSEDDE). A compositionally biased stretch (polar residues) spans 392 to 406 (EVMNPTSSDCVENSL).

Interacts with guanine-nucleotide exchange factors PSCD1, PSCD2, PSCD3 and PSCD4.

It localises to the cytoplasm. It is found in the cell membrane. In terms of biological role, enhances the promotion of guanine-nucleotide exchange by PSCD2 on ARF6 in a concentration-dependent manner. The chain is Interactor protein for cytohesin exchange factors 1 (Ipcef1) from Mus musculus (Mouse).